A 175-amino-acid chain; its full sequence is Anterior gradient protein 2 homolog (175 aa).

Positions 1–20 (MEKFSVSAILLLVAISGTLA) are cleaved as a signal peptide. Residues 21–40 (KDTTVKSGAKKDPKDSRPKL) form a required to promote cell adhesion region. The tract at residues 24–44 (TVKSGAKKDPKDSRPKLPQTL) is disordered. A compositionally biased stretch (basic and acidic residues) spans 29–38 (AKKDPKDSRP). Short sequence motifs (homodimer stabilization; interchain) lie at residues 45-54 (SRGWGDQLIW) and 60-67 (EALYRSKT).

Belongs to the AGR family. Monomer and homodimer. Interacts with LYPD3 and DAG1 (alphaDAG1). Interacts with MUC2; disulfide-linked. As to expression, expressed in lung, skeletal muscle, testis, liver, stomach, colon, small intestine, the goblet cells of the intestine and the mucuous neck cells of the stomach.

Its subcellular location is the secreted. It is found in the endoplasmic reticulum. Required for MUC2 post-transcriptional synthesis and secretion. May play a role in the production of mucus by intestinal cells. Proto-oncogene that may play a role in cell migration, cell differentiation and cell growth. Promotes cell adhesion. The chain is Anterior gradient protein 2 homolog (Agr2) from Mus musculus (Mouse).